The chain runs to 318 residues: METRYNLKSPAVKRLMKEAAELKDPTDHYHAQPLEDNLFEWHFTVRGPPDSDFDGGVYHGRIVLPPEYPMKPPSIILLTANGRFEVGKKICLSISGHHPETWQPSWSIRTALLAIIGFMPTKGEGAIGSLDYTPEERRALAKKSQDFCCEGCGSAMKDVLLPLKSGSGSSQADQEAKELARQISFKAEVNSSGKTIAESDLNQCFSLNDSQDDLPTTFQGATASTSYGAQNPSGAPLPQPTQPAPKNTSMSPRQRRAQQQSQRRPSTSPDVLQGQPPRAHHTEHGGSAMLIIILTLALAALIFRRIYLANEYIFDFEL.

The Cytoplasmic portion of the chain corresponds to Met-1–Thr-282. The 159-residue stretch at Pro-10 to Gly-168 folds into the UBC core domain. The active-site Glycyl thioester intermediate is Cys-91. Ser-184 is subject to Phosphoserine. The span at Pro-215–Ser-233 shows a compositional bias: polar residues. Positions Pro-215–Glu-283 are disordered. The span at Ser-249–Pro-269 shows a compositional bias: low complexity. Phosphoserine occurs at positions 266 and 268. A helical; Anchor for type IV membrane protein membrane pass occupies residues Glu-283–Phe-303. Topologically, residues Arg-304 to Leu-318 are lumenal.

The protein belongs to the ubiquitin-conjugating enzyme family. In terms of assembly, component of the HRD1 complex, which comprises at least SYNV1/HRD1, DERL1/2, FAM8A1, HERPUD1/HERP, OS9, SEL1L and UBE2J1. Interacts with E3 ligase RNF26. Interacts with E3 ligase RNF133. In terms of processing, phosphorylated at Ser-184 in a cytosolic stress-dependent manner by MAP kinase p38 MAPKAPK2. Phosphorylated UBE2J1 is rapidly ubiquitinated and subsequently degraded by the proteasome.

It is found in the endoplasmic reticulum membrane. It carries out the reaction S-ubiquitinyl-[E1 ubiquitin-activating enzyme]-L-cysteine + [E2 ubiquitin-conjugating enzyme]-L-cysteine = [E1 ubiquitin-activating enzyme]-L-cysteine + S-ubiquitinyl-[E2 ubiquitin-conjugating enzyme]-L-cysteine.. The protein operates within protein modification; protein ubiquitination. In terms of biological role, catalyzes the covalent attachment of ubiquitin to other proteins. Functions in the selective degradation of misfolded membrane proteins from the endoplasmic reticulum (ERAD) and is essential for cells to recover from ER stress. Plays a role in MAPKAPK2-dependent translational control of TNF-alpha synthesis. Also acts as a platform for perinuclear positioning of the endosomal system by mediating ubiquitination of SQSTM1 through interaction with the E3 ubiquitin-protein ligase RNF26. Plays a role in male fecundity through the interaction with the E3 ubiquitin-protein ligase RNF133. In Mus musculus (Mouse), this protein is Ubiquitin-conjugating enzyme E2 J1 (Ube2j1).